The following is a 277-amino-acid chain: Undecaprenyl-diphosphatase (277 aa).

8 helical membrane-spanning segments follow: residues 1 to 21 (MDIIQAIIIGIVQGLTEFLPV), 38 to 58 (SSLAFDVFLHLGSLIAVLWFF), 93 to 113 (LVWYVIIATIPVGLVGVLFES), 118 to 138 (LFAGALYVPAFFLFVTGTILY), 168 to 188 (AILPGLSRSGTTIAAGLVIGL), 191 to 211 (EFAAKFSFILSIPAILGAFVV), 222 to 242 (FNALAILFGFLAALISGYLAI), and 256 to 276 (IFAYYCWIVGIIVFMGSITHL).

Belongs to the UppP family.

The protein resides in the cell membrane. The enzyme catalyses di-trans,octa-cis-undecaprenyl diphosphate + H2O = di-trans,octa-cis-undecaprenyl phosphate + phosphate + H(+). Catalyzes the dephosphorylation of undecaprenyl diphosphate (UPP). This Methanobrevibacter smithii (strain ATCC 35061 / DSM 861 / OCM 144 / PS) protein is Undecaprenyl-diphosphatase.